We begin with the raw amino-acid sequence, 311 residues long: MALPMMIDCDPGHDDAIAMVLALASPELEVKAVTASAGNQTPEKTLRNVLRMLTLLNRPDIPVAGGAWKPLMRDLIIADNVHGESGLDGPSLPEPTFAPQNCTAVELMARVLRESQEPVTLVATGPQTNVALLLASHPELHAKIARIVIMGGAMGLGNWQPAAEFNIFVDPQAAEMVFQSGIPVVMAGLDVTHKAQILPADIERFRQIGNPVSTIVAELLDFFMAYHKDEKWGFDGAPLHDPCTIAWLLKPEIFTTIERWVGVETEGKYTQGMTVVDYYHLTGNRPNTTLMLDVDREAFVDLLAQRLAFYA.

His-240 is a catalytic residue.

Belongs to the IUNH family. RihA subfamily.

In terms of biological role, hydrolyzes cytidine or uridine to ribose and cytosine or uracil, respectively. The polypeptide is Pyrimidine-specific ribonucleoside hydrolase RihA (Klebsiella pneumoniae (strain 342)).